Reading from the N-terminus, the 304-residue chain is UDP-3-O-acyl-N-acetylglucosamine deacetylase (304 aa).

Residues His78, His237, and Asp241 each contribute to the Zn(2+) site. His264 serves as the catalytic Proton donor.

This sequence belongs to the LpxC family. Zn(2+) serves as cofactor.

It catalyses the reaction a UDP-3-O-[(3R)-3-hydroxyacyl]-N-acetyl-alpha-D-glucosamine + H2O = a UDP-3-O-[(3R)-3-hydroxyacyl]-alpha-D-glucosamine + acetate. Its pathway is glycolipid biosynthesis; lipid IV(A) biosynthesis; lipid IV(A) from (3R)-3-hydroxytetradecanoyl-[acyl-carrier-protein] and UDP-N-acetyl-alpha-D-glucosamine: step 2/6. Its function is as follows. Catalyzes the hydrolysis of UDP-3-O-myristoyl-N-acetylglucosamine to form UDP-3-O-myristoylglucosamine and acetate, the committed step in lipid A biosynthesis. The polypeptide is UDP-3-O-acyl-N-acetylglucosamine deacetylase (Polynucleobacter asymbioticus (strain DSM 18221 / CIP 109841 / QLW-P1DMWA-1) (Polynucleobacter necessarius subsp. asymbioticus)).